The following is a 69-amino-acid chain: MAEMKTADIRAMSEDQMDDAILSLKKERFNLRFQRATGQLENTSRLREARRDIARIKTIAAQKRAGKTK.

The protein belongs to the universal ribosomal protein uL29 family.

This Rhodopseudomonas palustris (strain TIE-1) protein is Large ribosomal subunit protein uL29.